The chain runs to 312 residues: 6-hydroxy-3-succinoylpyridine 3-monooxygenase HspA (312 aa).

Positions Ile-14–Phe-210 constitute an NYN domain.

The catalysed reaction is 4-(6-hydroxypyridin-3-yl)-4-oxobutanoate + 2 NADH + O2 + 2 H(+) = 2,5-dihydroxypyridine + succinate semialdehyde + 2 NAD(+) + H2O. Its pathway is alkaloid degradation; nicotine degradation. Functionally, involved in the nicotine degradation. Catalyzes the cleavage of 6-hydroxy-3-succinoylpyridine (HSP) by incorporation of oxygen at the 3-position to produce to 2,5-dihydroxypyridine (DHP) and succinic semialdehyde. The chain is 6-hydroxy-3-succinoylpyridine 3-monooxygenase HspA from Pseudomonas putida (strain DSM 28022 / S16).